The primary structure comprises 660 residues: Bifunctional polymyxin resistance protein ArnA (660 aa).

The segment at 1-304 (MKTVVFAYHD…TLGLVQGSRL (304 aa)) is formyltransferase ArnAFT. A (6R)-10-formyltetrahydrofolate-binding site is contributed by 86-88 (HLI). H104 (proton donor; for formyltransferase activity) is an active-site residue. Residues R114 and 136–140 (VKRAD) each bind (6R)-10-formyltetrahydrofolate. The dehydrogenase ArnADH stretch occupies residues 314–660 (RRTRVLILGV…RTVDLTDKPS (347 aa)). Residues D347 and 368 to 369 (DI) contribute to the NAD(+) site. UDP-alpha-D-glucuronate-binding positions include A393, Y398, and 432–433 (TS). E434 acts as the Proton acceptor; for decarboxylase activity in catalysis. UDP-alpha-D-glucuronate contacts are provided by residues R460, N492, 526–535 (KLIDGGKQKR), and Y613. R619 serves as the catalytic Proton donor; for decarboxylase activity.

In the N-terminal section; belongs to the Fmt family. UDP-L-Ara4N formyltransferase subfamily. This sequence in the C-terminal section; belongs to the NAD(P)-dependent epimerase/dehydratase family. UDP-glucuronic acid decarboxylase subfamily. Homohexamer, formed by a dimer of trimers.

The enzyme catalyses UDP-alpha-D-glucuronate + NAD(+) = UDP-beta-L-threo-pentopyranos-4-ulose + CO2 + NADH. It carries out the reaction UDP-4-amino-4-deoxy-beta-L-arabinose + (6R)-10-formyltetrahydrofolate = UDP-4-deoxy-4-formamido-beta-L-arabinose + (6S)-5,6,7,8-tetrahydrofolate + H(+). It functions in the pathway nucleotide-sugar biosynthesis; UDP-4-deoxy-4-formamido-beta-L-arabinose biosynthesis; UDP-4-deoxy-4-formamido-beta-L-arabinose from UDP-alpha-D-glucuronate: step 1/3. It participates in nucleotide-sugar biosynthesis; UDP-4-deoxy-4-formamido-beta-L-arabinose biosynthesis; UDP-4-deoxy-4-formamido-beta-L-arabinose from UDP-alpha-D-glucuronate: step 3/3. Its pathway is bacterial outer membrane biogenesis; lipopolysaccharide biosynthesis. Its function is as follows. Bifunctional enzyme that catalyzes the oxidative decarboxylation of UDP-glucuronic acid (UDP-GlcUA) to UDP-4-keto-arabinose (UDP-Ara4O) and the addition of a formyl group to UDP-4-amino-4-deoxy-L-arabinose (UDP-L-Ara4N) to form UDP-L-4-formamido-arabinose (UDP-L-Ara4FN). The modified arabinose is attached to lipid A and is required for resistance to polymyxin and cationic antimicrobial peptides. The chain is Bifunctional polymyxin resistance protein ArnA from Escherichia coli O127:H6 (strain E2348/69 / EPEC).